Consider the following 217-residue polypeptide: MKSSNKLMALGIVFSIAVLIVIGTIVYSIINDKKDKGNEMFAYSTQQSLGKDDAPVKVVEFGDFKCPACRTWDVTVLPRLKEEYIDKGKVQLYFINFPFIGKDSDLGAAAGEAIYKQDQDSFWIFYDEIYQSQKKDTEEWITEELLLNIVKEKLPKIDVEQFKKDLHSKEIKEKVRKDSDRAQKLKVQGAPSVYVNGNLANPDFDSLKKAIDKELKK.

Positions 1 to 28 (MKSSNKLMALGIVFSIAVLIVIGTIVYS) are cleaved as a signal peptide. Cys-66 and Cys-69 are joined by a disulfide.

It belongs to the thioredoxin family. DsbA subfamily.

May be required for disulfide bond formation in some proteins. The sequence is that of Probable disulfide bond formation protein D (bdbD) from Bacillus anthracis.